A 639-amino-acid polypeptide reads, in one-letter code: Immunoglobulin-like domain-containing receptor 2 (639 aa).

The N-terminal stretch at M1–G20 is a signal peptide. In terms of domain architecture, Ig-like V-type spans L21 to E162. The Lumenal segment spans residues L21–E186. The cysteines at positions 42 and 145 are disulfide-linked. A helical membrane pass occupies residues W187 to C207. Topologically, residues W208–V639 are cytoplasmic. 3 disordered regions span residues L273–R295, W374–R415, and Y437–V639. 2 stretches are compositionally biased toward basic and acidic residues: residues Y393–S414 and R442–A464. Phosphoserine is present on S473. Positions R483–R493 are enriched in basic and acidic residues. An Omega-N-methylarginine modification is found at R544. A Phosphoserine modification is found at S579. Positions R606–E617 are enriched in basic and acidic residues.

The protein belongs to the immunoglobulin superfamily. LISCH7 family. In terms of assembly, interacts with MARVELD2 and OCLN. Interacts with P4HB AND HSPA5; the interaction with HSPA5 stabilizes ILDR2 expression. Interacts (via C-terminus) with TRA2A, TRA2B and SRSF1. In terms of tissue distribution, expressed in testis, brain, pituitary, colon, heart, nerves, prostate, esophagus, lung liver and small intestine. Highly expressed in macrophages, also expressed in monocytes and at low levels in NK and NKT cells (at protein level).

Its subcellular location is the endoplasmic reticulum membrane. The protein resides in the cell junction. It localises to the tight junction. It is found in the nucleus. In terms of biological role, may be involved in ER stress pathways with effects on lipid homeostasis and insulin secretion. With ILDR1 and LSR, involved in the maintain of the epithelial barrier function through the recruitment of MARVELD2/tricellulin to tricellular tight junctions. Also functions as a B7-like protein family member expressed on immune cells and inflamed tissue and with T-cell inhibitory activity. In the inner ear, may regulate alternative pre-mRNA splicing via binding to TRA2A, TRA2B and SRSF1. The chain is Immunoglobulin-like domain-containing receptor 2 from Homo sapiens (Human).